The following is a 478-amino-acid chain: ATP synthase subunit beta (478 aa).

Position 160–167 (G160–T167) interacts with ATP.

The protein belongs to the ATPase alpha/beta chains family. F-type ATPases have 2 components, CF(1) - the catalytic core - and CF(0) - the membrane proton channel. CF(1) has five subunits: alpha(3), beta(3), gamma(1), delta(1), epsilon(1). CF(0) has three main subunits: a(1), b(2) and c(9-12). The alpha and beta chains form an alternating ring which encloses part of the gamma chain. CF(1) is attached to CF(0) by a central stalk formed by the gamma and epsilon chains, while a peripheral stalk is formed by the delta and b chains.

The protein resides in the cell inner membrane. The catalysed reaction is ATP + H2O + 4 H(+)(in) = ADP + phosphate + 5 H(+)(out). Its function is as follows. Produces ATP from ADP in the presence of a proton gradient across the membrane. The catalytic sites are hosted primarily by the beta subunits. This is ATP synthase subunit beta from Orientia tsutsugamushi (strain Boryong) (Rickettsia tsutsugamushi).